Here is a 431-residue protein sequence, read N- to C-terminus: Cyclin-B2-4 (431 aa).

Residues 1 to 30 (MGGSDENRHGVIGPMNRQQGGLRGGKVIPT) form a disordered region.

This sequence belongs to the cyclin family. Cyclin AB subfamily. In terms of assembly, interacts with SMR11.

The protein is Cyclin-B2-4 (CYCB2-4) of Arabidopsis thaliana (Mouse-ear cress).